The primary structure comprises 95 residues: Co-chaperonin GroES (95 aa).

It belongs to the GroES chaperonin family. In terms of assembly, heptamer of 7 subunits arranged in a ring. Interacts with the chaperonin GroEL.

It is found in the cytoplasm. Functionally, together with the chaperonin GroEL, plays an essential role in assisting protein folding. The GroEL-GroES system forms a nano-cage that allows encapsulation of the non-native substrate proteins and provides a physical environment optimized to promote and accelerate protein folding. GroES binds to the apical surface of the GroEL ring, thereby capping the opening of the GroEL channel. The sequence is that of Co-chaperonin GroES from Rickettsia bellii (strain RML369-C).